The following is a 495-amino-acid chain: UDP-N-acetylmuramoyl-L-alanyl-D-glutamate--2,6-diaminopimelate ligase (495 aa).

UDP-N-acetyl-alpha-D-muramoyl-L-alanyl-D-glutamate is bound by residues Leu27, Ser29, and 44-46; that span reads HQA. 116–122 provides a ligand contact to ATP; it reads GTNGKTT. UDP-N-acetyl-alpha-D-muramoyl-L-alanyl-D-glutamate contacts are provided by residues Asn157, 158–159, Ser185, Gln191, and Arg193; that span reads TT. Lys225 is modified (N6-carboxylysine). Meso-2,6-diaminopimelate contacts are provided by residues Arg390, 414-417, Gly465, and Glu469; that span reads DNPR. The Meso-diaminopimelate recognition motif signature appears at 414–417; that stretch reads DNPR.

This sequence belongs to the MurCDEF family. MurE subfamily. The cofactor is Mg(2+). In terms of processing, carboxylation is probably crucial for Mg(2+) binding and, consequently, for the gamma-phosphate positioning of ATP.

It is found in the cytoplasm. The catalysed reaction is UDP-N-acetyl-alpha-D-muramoyl-L-alanyl-D-glutamate + meso-2,6-diaminopimelate + ATP = UDP-N-acetyl-alpha-D-muramoyl-L-alanyl-gamma-D-glutamyl-meso-2,6-diaminopimelate + ADP + phosphate + H(+). The protein operates within cell wall biogenesis; peptidoglycan biosynthesis. In terms of biological role, catalyzes the addition of meso-diaminopimelic acid to the nucleotide precursor UDP-N-acetylmuramoyl-L-alanyl-D-glutamate (UMAG) in the biosynthesis of bacterial cell-wall peptidoglycan. The polypeptide is UDP-N-acetylmuramoyl-L-alanyl-D-glutamate--2,6-diaminopimelate ligase (Escherichia coli O157:H7).